A 640-amino-acid polypeptide reads, in one-letter code: 1,4-alpha-glucan branching enzyme GlgB (640 aa).

D318 functions as the Nucleophile in the catalytic mechanism. E371 functions as the Proton donor in the catalytic mechanism.

This sequence belongs to the glycosyl hydrolase 13 family. GlgB subfamily. In terms of assembly, monomer.

The enzyme catalyses Transfers a segment of a (1-&gt;4)-alpha-D-glucan chain to a primary hydroxy group in a similar glucan chain.. It functions in the pathway glycan biosynthesis; glycogen biosynthesis. Its function is as follows. Catalyzes the formation of the alpha-1,6-glucosidic linkages in glycogen by scission of a 1,4-alpha-linked oligosaccharide from growing alpha-1,4-glucan chains and the subsequent attachment of the oligosaccharide to the alpha-1,6 position. The chain is 1,4-alpha-glucan branching enzyme GlgB from Francisella tularensis subsp. holarctica (strain FTNF002-00 / FTA).